Consider the following 120-residue polypeptide: Phosphoribosyl-AMP cyclohydrolase (120 aa).

D75 serves as a coordination point for Mg(2+). A Zn(2+)-binding site is contributed by C76. Residues D77 and D79 each coordinate Mg(2+). Zn(2+) is bound by residues C92 and C99.

This sequence belongs to the PRA-CH family. Homodimer. Requires Mg(2+) as cofactor. Zn(2+) is required as a cofactor.

It is found in the cytoplasm. The enzyme catalyses 1-(5-phospho-beta-D-ribosyl)-5'-AMP + H2O = 1-(5-phospho-beta-D-ribosyl)-5-[(5-phospho-beta-D-ribosylamino)methylideneamino]imidazole-4-carboxamide. The protein operates within amino-acid biosynthesis; L-histidine biosynthesis; L-histidine from 5-phospho-alpha-D-ribose 1-diphosphate: step 3/9. Catalyzes the hydrolysis of the adenine ring of phosphoribosyl-AMP. The polypeptide is Phosphoribosyl-AMP cyclohydrolase (Haloarcula marismortui (strain ATCC 43049 / DSM 3752 / JCM 8966 / VKM B-1809) (Halobacterium marismortui)).